Here is a 147-residue protein sequence, read N- to C-terminus: Myoglobin (147 aa).

The residue at position 2 (A2) is an N-acetylalanine. The Globin domain occupies 2–141 (ADFDAVLKCW…IIADLEANYK (140 aa)). H60 provides a ligand contact to nitrite. Position 60 (H60) interacts with O2. A heme b-binding site is contributed by H89.

The protein belongs to the globin family. Monomeric.

Its subcellular location is the cytoplasm. It is found in the sarcoplasm. The enzyme catalyses Fe(III)-heme b-[protein] + nitric oxide + H2O = Fe(II)-heme b-[protein] + nitrite + 2 H(+). It catalyses the reaction H2O2 + AH2 = A + 2 H2O. Its function is as follows. Monomeric heme protein which primary function is to store oxygen and facilitate its diffusion within muscle tissues. Reversibly binds oxygen through a pentacoordinated heme iron and enables its timely and efficient release as needed during periods of heightened demand. Depending on the oxidative conditions of tissues and cells, and in addition to its ability to bind oxygen, it also has a nitrite reductase activity whereby it regulates the production of bioactive nitric oxide. Under stress conditions, like hypoxia and anoxia, it also protects cells against reactive oxygen species thanks to its pseudoperoxidase activity. This chain is Myoglobin (mb), found in Thunnus albacares (Yellowfin tuna).